The chain runs to 447 residues: GTPase Der (447 aa).

2 consecutive EngA-type G domains span residues 4 to 165 (QIIA…PKEK) and 180 to 357 (VQIV…KNWN). Residues 10–17 (GRPNVGKS), 57–61 (DTPGL), 119–122 (NKCE), 186–193 (GRPNAGKS), 233–237 (DTAGL), and 298–301 (NKWD) each bind GTP. Residues 358-443 (KKITTSKLNE…PIRFAYVKTK (86 aa)) enclose the KH-like domain.

It belongs to the TRAFAC class TrmE-Era-EngA-EngB-Septin-like GTPase superfamily. EngA (Der) GTPase family. Associates with the 50S ribosomal subunit.

Its function is as follows. GTPase that plays an essential role in the late steps of ribosome biogenesis. The chain is GTPase Der from Rickettsia canadensis (strain McKiel).